Here is a 582-residue protein sequence, read N- to C-terminus: Insulin-like growth factor 2 mRNA-binding protein 3 (582 aa).

RRM domains are found at residues 2–75 (NKLY…HSVP) and 81–156 (CKLQ…YIPD). The interval 164 to 190 (PAVGGRRGFNPRGPPRQGSPSLGARPK) is disordered. A Phosphoserine modification is found at Ser-182. KH domains lie at 194–259 (DVPL…CRNI), 275–342 (EIPL…EEEI), 408–473 (SETV…QGRI), and 490–556 (KLEA…QRKI). The interval 562–582 (QVRRQQQPKPSAAGPPVARRK) is disordered.

This sequence belongs to the RRM IMP/VICKZ family. As to quaternary structure, homodimer and multimer.

It is found in the cytoplasm. The protein resides in the nucleus. It localises to the P-body. The protein localises to the stress granule. RNA-binding factor that may recruit target transcripts to cytoplasmic protein-RNA complexes (mRNPs). This transcript 'caging' into mRNPs allows mRNA transport and transient storage. It also modulates the rate and location at which target transcripts encounter the translational apparatus and shields them from endonuclease attacks or microRNA-mediated degradation. Preferentially binds to N6-methyladenosine (m6A)-containing mRNAs and increases their stability. Involved in neuronal crest migration. In Danio rerio (Zebrafish), this protein is Insulin-like growth factor 2 mRNA-binding protein 3 (igf2bp3).